We begin with the raw amino-acid sequence, 144 residues long: Large ribosomal subunit protein uL15 (144 aa).

A disordered region spans residues 1-49 (MRLNTLSPAAGSKSAPKRVGRGIGSGLGKTAGRGHKGQKSRSGGGVRVG). Residues 21–31 (RGIGSGLGKTA) are compositionally biased toward gly residues.

The protein belongs to the universal ribosomal protein uL15 family. Part of the 50S ribosomal subunit.

In terms of biological role, binds to the 23S rRNA. In Shewanella denitrificans (strain OS217 / ATCC BAA-1090 / DSM 15013), this protein is Large ribosomal subunit protein uL15.